We begin with the raw amino-acid sequence, 592 residues long: Arginine--tRNA ligase (592 aa).

Residues 112–122 carry the 'HIGH' region motif; the sequence is VNPNKELHVGH.

Belongs to the class-I aminoacyl-tRNA synthetase family. As to quaternary structure, monomer.

The protein localises to the cytoplasm. The catalysed reaction is tRNA(Arg) + L-arginine + ATP = L-arginyl-tRNA(Arg) + AMP + diphosphate. In Thermus thermophilus (strain ATCC BAA-163 / DSM 7039 / HB27), this protein is Arginine--tRNA ligase.